The following is a 298-amino-acid chain: 4-hydroxy-tetrahydrodipicolinate synthase (298 aa).

Thr48 is a pyruvate binding site. Tyr137 acts as the Proton donor/acceptor in catalysis. Lys166 functions as the Schiff-base intermediate with substrate in the catalytic mechanism. Residue Ile207 coordinates pyruvate.

It belongs to the DapA family. Homotetramer; dimer of dimers.

The protein resides in the cytoplasm. The catalysed reaction is L-aspartate 4-semialdehyde + pyruvate = (2S,4S)-4-hydroxy-2,3,4,5-tetrahydrodipicolinate + H2O + H(+). It participates in amino-acid biosynthesis; L-lysine biosynthesis via DAP pathway; (S)-tetrahydrodipicolinate from L-aspartate: step 3/4. Catalyzes the condensation of (S)-aspartate-beta-semialdehyde [(S)-ASA] and pyruvate to 4-hydroxy-tetrahydrodipicolinate (HTPA). This Campylobacter jejuni subsp. jejuni serotype O:6 (strain 81116 / NCTC 11828) protein is 4-hydroxy-tetrahydrodipicolinate synthase.